A 197-amino-acid chain; its full sequence is Gastrula zinc finger protein XlCGF17.1 (197 aa).

C2H2-type zinc fingers lie at residues 6-28, 34-56, 62-84, 90-112, 118-140, 146-169, and 175-197; these read ISCSECGKCFIKSSELTVHQMTH, YSCSECGKCFASLSHLRVHQKIH, FSCSECGKCFLNRGSLVRHHRTH, FFCSECGKRFAASSDLRVHRRTH, FSCSECEKRFLNPWSLVRHYRTH, FSCSECGKCFARSSDLTVHRRRSH, and FSCSECGKCFTSSSELTVHLRTH.

The protein belongs to the krueppel C2H2-type zinc-finger protein family.

Its subcellular location is the nucleus. In terms of biological role, may be involved in transcriptional regulation. The chain is Gastrula zinc finger protein XlCGF17.1 from Xenopus laevis (African clawed frog).